Consider the following 135-residue polypeptide: ATP synthase epsilon chain (135 aa).

Belongs to the ATPase epsilon chain family. In terms of assembly, F-type ATPases have 2 components, CF(1) - the catalytic core - and CF(0) - the membrane proton channel. CF(1) has five subunits: alpha(3), beta(3), gamma(1), delta(1), epsilon(1). CF(0) has three main subunits: a, b and c.

It localises to the cell inner membrane. In terms of biological role, produces ATP from ADP in the presence of a proton gradient across the membrane. This is ATP synthase epsilon chain from Rhizobium leguminosarum bv. trifolii (strain WSM2304).